A 367-amino-acid polypeptide reads, in one-letter code: Flagellar P-ring protein (367 aa).

Positions 1–24 (MLRPIITLLCLTLMLCTAAGPAGA) are cleaved as a signal peptide.

It belongs to the FlgI family. In terms of assembly, the basal body constitutes a major portion of the flagellar organelle and consists of four rings (L,P,S, and M) mounted on a central rod.

The protein localises to the periplasm. The protein resides in the bacterial flagellum basal body. Assembles around the rod to form the L-ring and probably protects the motor/basal body from shearing forces during rotation. This chain is Flagellar P-ring protein, found in Syntrophotalea carbinolica (strain DSM 2380 / NBRC 103641 / GraBd1) (Pelobacter carbinolicus).